Reading from the N-terminus, the 241-residue chain is Platelet-derived growth factor subunit B (241 aa).

The signal sequence occupies residues 1–20 (MNRCWALFLSLCCYLRLVSA). Positions 21–81 (EGDPIPEELY…ELESLSRGRR (61 aa)) are cleaved as a propeptide — removed in mature form. N-linked (GlcNAc...) asparagine glycosylation occurs at Asn63. 3 disulfide bridges follow: Cys97-Cys141, Cys130-Cys178, and Cys134-Cys180. Positions 191–241 (TPGSSQEQRAARTPQTRVTIRTVRVRRPPKGKHRKFKHTHDKTALKETLGA) are cleaved as a propeptide — removed in mature form. The segment covering 217 to 230 (RPPKGKHRKFKHTH) has biased composition (basic residues). A disordered region spans residues 217 to 241 (RPPKGKHRKFKHTHDKTALKETLGA).

This sequence belongs to the PDGF/VEGF growth factor family. In terms of assembly, antiparallel homodimer; disulfide-linked. Antiparallel heterodimer with PDGFA; disulfide-linked. The PDGFB homodimer interacts with PDGFRA and PDGFRB homodimers, and with heterodimers formed by PDGFRA and PDGFRB. The heterodimer composed of PDGFA and PDGFB interacts with PDGFRB homodimers, and with heterodimers formed by PDGFRA and PDGFRB. Interacts with XLKD1. Interacts with LRP1. Interacts with SORL1 (via the N-terminal ectodomain). Interacts with CD82; this interaction inhibits PDGFB-mediated signaling pathway.

Its subcellular location is the secreted. Functionally, growth factor that plays an essential role in the regulation of embryonic development, cell proliferation, cell migration, survival and chemotaxis. Potent mitogen for cells of mesenchymal origin. Required for normal proliferation and recruitment of pericytes and vascular smooth muscle cells in the central nervous system, skin, lung, heart and placenta. Required for normal blood vessel development, and for normal development of kidney glomeruli. Plays an important role in wound healing. Signaling is modulated by the formation of heterodimers with PDGFA. The polypeptide is Platelet-derived growth factor subunit B (PDGFB) (Ovis aries (Sheep)).